Here is a 130-residue protein sequence, read N- to C-terminus: Anti-adapter protein IraD (130 aa).

The protein belongs to the GpW/Gp25 family. IraD subfamily. In terms of assembly, interacts with RssB.

It localises to the cytoplasm. Its function is as follows. Inhibits RpoS proteolysis by regulating RssB activity, thereby increasing the stability of the sigma stress factor RpoS during oxidative stress. Its effect on RpoS stability is due to its interaction with RssB, which probably blocks the interaction of RssB with RpoS, and the consequent delivery of the RssB-RpoS complex to the ClpXP protein degradation pathway. The protein is Anti-adapter protein IraD of Escherichia coli O139:H28 (strain E24377A / ETEC).